The primary structure comprises 496 residues: Fibronectin type III and SPRY domain-containing protein 1 (496 aa).

Residues Q4–E99 adopt a coiled-coil conformation. One can recognise a COS domain in the interval L105–L162. The 105-residue stretch at V164–F268 folds into the Fibronectin type-III domain. Residues F268–S477 enclose the B30.2/SPRY domain. Positions K301–D336 are disordered. Omega-N-methylarginine is present on residues R310 and R320.

Oligomerization is required for binding to microtubules.

The protein resides in the cytoplasm. The protein localises to the cytoskeleton. It is found in the microtubule organizing center. It localises to the centrosome. Its subcellular location is the nucleus. The protein resides in the cleavage furrow. Its function is as follows. May be involved in microtubule organization and stabilization. In Bos taurus (Bovine), this protein is Fibronectin type III and SPRY domain-containing protein 1 (FSD1).